A 198-amino-acid polypeptide reads, in one-letter code: MTNADNELEPRLITETGLDQRLADIIEPVLVGMGFRLIRVRMLNQNGMTMQVMAERNDGTMTVQDCEEVSMAISPVLDVEDPIDKEYHLEVSSPGIDRPMVRKSDFVRWQGHLVKCETSIMIGNRKRFRGKIVEADADGFTLERDQIAYGEEPKVSIPFTALSDAKLILTDDLIRDALRADKLAKAQAANQNEADEQE.

The protein belongs to the RimP family.

The protein resides in the cytoplasm. Required for maturation of 30S ribosomal subunits. The chain is Ribosome maturation factor RimP from Rhizobium etli (strain CIAT 652).